A 500-amino-acid polypeptide reads, in one-letter code: Na(+)/H(+) antiporter NhaB (500 aa).

Helical transmembrane passes span 28–50, 68–88, 98–118, 121–141, 145–165, 205–225, 244–264, 301–318, 350–370, 394–414, 449–469, and 477–497; these read FLLS…VLVG, GGLL…ALYA, LLLM…LLLF, LLLG…LAAL, FLDA…FFAV, LLMH…VGEP, QVAP…VALE, ALLV…GLAL, FQEA…VAVI, MLFI…VATI, VATP…IAPL, and MVWM…WAVS.

It belongs to the NhaB Na(+)/H(+) (TC 2.A.34) antiporter family.

The protein localises to the cell inner membrane. The catalysed reaction is 2 Na(+)(in) + 3 H(+)(out) = 2 Na(+)(out) + 3 H(+)(in). In terms of biological role, na(+)/H(+) antiporter that extrudes sodium in exchange for external protons. This is Na(+)/H(+) antiporter NhaB from Pseudomonas paraeruginosa (strain DSM 24068 / PA7) (Pseudomonas aeruginosa (strain PA7)).